The primary structure comprises 360 residues: Alpha-2-macroglobulin receptor-associated protein (360 aa).

The first 33 residues, 1 to 33 (MAPLRDRVSTLPRLQLLVLLLLPLLLVPQPIAG), serve as a signal peptide directing secretion. 2 positions are modified to phosphoserine: serine 53 and serine 138. Residues 222–302 (SKHSELKDRL…KHNHYQKQLE (81 aa)) adopt a coiled-coil conformation. The tract at residues 240–356 (RLRKVSHQGY…DLSSRVSRAR (117 aa)) is LDL receptor binding. Residue asparagine 271 is glycosylated (N-linked (GlcNAc...) asparagine). Positions 357-360 (HNEL) match the Prevents secretion from ER motif.

It belongs to the alpha-2-MRAP family. In terms of assembly, interacts with the LRP1/alpha-2-macroglobulin receptor heavy and light chains; the interaction is transient and coincides with a reduction of ligand binding by the receptor. Interacts with LRP2/glycoprotein 330. Interacts with LRP1B; binding is followed by internalization and degradation. Interacts with LDLR. Interacts with SORL1. Interacts with LRP1; this interaction is followed by rapid internalization. Post-translationally, N-glycosylated.

It is found in the rough endoplasmic reticulum lumen. The protein localises to the endoplasmic reticulum-Golgi intermediate compartment lumen. Its subcellular location is the golgi apparatus. It localises to the cis-Golgi network. The protein resides in the golgi apparatus lumen. It is found in the endosome lumen. The protein localises to the cell surface. Functionally, molecular chaperone for LDL receptor-related proteins that may regulate their ligand binding activity along the secretory pathway. This chain is Alpha-2-macroglobulin receptor-associated protein (Lrpap1), found in Rattus norvegicus (Rat).